Consider the following 63-residue polypeptide: Conotoxin Lt11.1 (63 aa).

The signal sequence occupies residues Met-1–Ala-23. 4 cysteine pairs are disulfide-bonded: Cys-24-Cys-34, Cys-28-Cys-39, Cys-33-Cys-42, and Cys-38-Cys-47. Positions Ala-53 to Arg-63 are excised as a propeptide.

This sequence belongs to the conotoxin I2 superfamily. Expressed by the venom duct.

Its subcellular location is the secreted. This Conus litteratus (Lettered cone) protein is Conotoxin Lt11.1.